Here is a 156-residue protein sequence, read N- to C-terminus: Small ribosomal subunit protein uS7 (156 aa).

It belongs to the universal ribosomal protein uS7 family. As to quaternary structure, part of the 30S ribosomal subunit. Contacts proteins S9 and S11.

Functionally, one of the primary rRNA binding proteins, it binds directly to 16S rRNA where it nucleates assembly of the head domain of the 30S subunit. Is located at the subunit interface close to the decoding center, probably blocks exit of the E-site tRNA. This is Small ribosomal subunit protein uS7 from Renibacterium salmoninarum (strain ATCC 33209 / DSM 20767 / JCM 11484 / NBRC 15589 / NCIMB 2235).